Consider the following 121-residue polypeptide: Large ribosomal subunit protein uL18 (121 aa).

The protein belongs to the universal ribosomal protein uL18 family. As to quaternary structure, part of the 50S ribosomal subunit; part of the 5S rRNA/L5/L18/L25 subcomplex. Contacts the 5S and 23S rRNAs.

Functionally, this is one of the proteins that bind and probably mediate the attachment of the 5S RNA into the large ribosomal subunit, where it forms part of the central protuberance. This Dehalococcoides mccartyi (strain ATCC BAA-2266 / KCTC 15142 / 195) (Dehalococcoides ethenogenes (strain 195)) protein is Large ribosomal subunit protein uL18.